Reading from the N-terminus, the 142-residue chain is ATP synthase epsilon chain (142 aa).

The protein belongs to the ATPase epsilon chain family. As to quaternary structure, F-type ATPases have 2 components, CF(1) - the catalytic core - and CF(0) - the membrane proton channel. CF(1) has five subunits: alpha(3), beta(3), gamma(1), delta(1), epsilon(1). CF(0) has three main subunits: a, b and c.

The protein localises to the cell inner membrane. Produces ATP from ADP in the presence of a proton gradient across the membrane. The sequence is that of ATP synthase epsilon chain from Maridesulfovibrio salexigens (strain ATCC 14822 / DSM 2638 / NCIMB 8403 / VKM B-1763) (Desulfovibrio salexigens).